A 683-amino-acid chain; its full sequence is DNA ligase (683 aa).

NAD(+) is bound by residues 44 to 48 (DAEYD), 93 to 94 (SL), and Glu-127. Lys-129 serves as the catalytic N6-AMP-lysine intermediate. Residues Arg-150, Glu-187, Lys-302, and Lys-326 each contribute to the NAD(+) site. Cys-420, Cys-423, Cys-438, and Cys-444 together coordinate Zn(2+). One can recognise a BRCT domain in the interval 601–683 (RVGGRLAGLT…SKLLATGGNQ (83 aa)).

It belongs to the NAD-dependent DNA ligase family. LigA subfamily. Requires Mg(2+) as cofactor. Mn(2+) serves as cofactor.

It carries out the reaction NAD(+) + (deoxyribonucleotide)n-3'-hydroxyl + 5'-phospho-(deoxyribonucleotide)m = (deoxyribonucleotide)n+m + AMP + beta-nicotinamide D-nucleotide.. Its function is as follows. DNA ligase that catalyzes the formation of phosphodiester linkages between 5'-phosphoryl and 3'-hydroxyl groups in double-stranded DNA using NAD as a coenzyme and as the energy source for the reaction. It is essential for DNA replication and repair of damaged DNA. In Trichlorobacter lovleyi (strain ATCC BAA-1151 / DSM 17278 / SZ) (Geobacter lovleyi), this protein is DNA ligase.